Here is a 344-residue protein sequence, read N- to C-terminus: 1-acyl-sn-glycerol-3-phosphate acyltransferase BAT2, chloroplastic (344 aa).

A chloroplast-targeting transit peptide spans 1-49 (MDVASAPGVSSHPPYYSKPICSSQSSLIRIPINKGCCFARSSNLITSLH). The helical transmembrane segment at 113-133 (GICFCLVAGVSAIVLIVLMIT) threads the bilayer. The HXXXXD motif signature appears at 188–193 (HQSFLD). A helical transmembrane segment spans residues 210 to 230 (TGIFVIPVIGWAMSMMGVVPL).

The protein belongs to the 1-acyl-sn-glycerol-3-phosphate acyltransferase family. As to expression, widely expressed.

Its subcellular location is the plastid. The protein resides in the chloroplast membrane. It carries out the reaction a fatty acyl-[ACP] + a 1-acyl-sn-glycero-3-phosphate = a 1,2-diacyl-sn-glycero-3-phosphate + holo-[ACP]. It catalyses the reaction a 1-acyl-sn-glycero-3-phosphate + an acyl-CoA = a 1,2-diacyl-sn-glycero-3-phosphate + CoA. Its pathway is phospholipid metabolism; CDP-diacylglycerol biosynthesis; CDP-diacylglycerol from sn-glycerol 3-phosphate: step 2/3. In terms of biological role, plastidial enzyme of the prokaryotic glycerol-3-phosphate pathway that converts lysophosphatidic acid (LPA) into phosphatidic acid by incorporating an acyl moiety at position sn-2. Utilizes palmitoyl-ACP (16:0-ACP) to produce phosphatidic acid containing a saturated group at position sn-2, which is characteristic of lipids synthesized by the prokaryotic pathway. In vitro, can use 16:0-CoA as acyl donor. This is 1-acyl-sn-glycerol-3-phosphate acyltransferase BAT2, chloroplastic from Brassica napus (Rape).